The sequence spans 90 residues: Large ribosomal subunit protein uL23c (90 aa).

The protein belongs to the universal ribosomal protein uL23 family. Part of the 50S ribosomal subunit.

It localises to the plastid. Its subcellular location is the chloroplast. Binds to 23S rRNA. This chain is Large ribosomal subunit protein uL23c (rpl23), found in Oltmannsiellopsis viridis (Marine flagellate).